The following is a 1416-amino-acid chain: 1-phosphatidylinositol 4,5-bisphosphate phosphodiesterase eta-2 (1416 aa).

Residues 1-155 (MSGPWPSPDS…WVTGLRYLMA (155 aa)) form a necessary for plasma membrane localization region. The PH domain maps to 47-155 (GAMQEGMQMV…WVTGLRYLMA (109 aa)). EF-hand domains are found at residues 169 to 204 (TRDQ…LNVN) and 205 to 241 (LPRQ…MSTR). Residues Asp182, Asn184, Asp186, Ser188, and Glu193 each coordinate Ca(2+). One can recognise a PI-PLC X-box domain in the interval 326-471 (QDMTQPLSHY…LKGKILVKGK (146 aa)). Residue His341 is part of the active site. 3 residues coordinate Ca(2+): Asn342, Glu371, and Asp373. His385 is an active-site residue. Residue Glu420 coordinates Ca(2+). Substrate contacts are provided by Lys469 and Lys471. Phosphoserine is present on residues Ser487 and Ser491. A disordered region spans residues 535–620 (DPNNFSVSTL…RGATRQKKTM (86 aa)). The segment covering 537-546 (NNFSVSTLSP) has biased composition (polar residues). Positions 581-592 (SRRKKKGSKLKK) are enriched in basic residues. Phosphoserine occurs at positions 595 and 605. Residues 626–740 (LSDLVKYTKS…GYVLKPGCMC (115 aa)) form the PI-PLC Y-box domain. Substrate is bound by residues Ser653 and Arg680. The C2 domain occupies 740 to 869 (CQGVFNPNSE…PGYRHVYLEG (130 aa)). Ile784, Asp786, Asp810, Asp839, His840, and Asp841 together coordinate Ca(2+). Disordered regions lie at residues 905–1109 (GSLD…GGWR), 1121–1222 (YSDA…LQPR), and 1315–1405 (ITSP…GPAS). A compositionally biased stretch (pro residues) spans 1011-1021 (APGPGPPPPAA). The span at 1073–1083 (GSQTDGRSQPR) shows a compositional bias: polar residues. The span at 1143–1166 (VSSSSSMSSSDTVIDLSLPSLGLG) shows a compositional bias: low complexity. The span at 1199 to 1208 (KSKSNPNLRA) shows a compositional bias: polar residues. Gly residues predominate over residues 1324–1333 (AGEGVAGGPG).

Ca(2+) serves as cofactor. As to expression, expressed in retina and kidney.

The protein localises to the cytoplasm. The protein resides in the cell membrane. It carries out the reaction a 1,2-diacyl-sn-glycero-3-phospho-(1D-myo-inositol-4,5-bisphosphate) + H2O = 1D-myo-inositol 1,4,5-trisphosphate + a 1,2-diacyl-sn-glycerol + H(+). With respect to regulation, activity is stimulated by GNB1:GNG2. The production of the second messenger molecules diacylglycerol (DAG) and inositol 1,4,5-trisphosphate (IP3) is mediated by activated phosphatidylinositol-specific phospholipase C enzymes. This phospholipase activity is very sensitive to calcium. May be important for formation and maintenance of the neuronal network in the postnatal brain. The polypeptide is 1-phosphatidylinositol 4,5-bisphosphate phosphodiesterase eta-2 (Homo sapiens (Human)).